Reading from the N-terminus, the 275-residue chain is Tryptophan synthase alpha chain (275 aa).

Catalysis depends on proton acceptor residues Glu-49 and Asp-60.

Belongs to the TrpA family. Tetramer of two alpha and two beta chains.

The enzyme catalyses (1S,2R)-1-C-(indol-3-yl)glycerol 3-phosphate + L-serine = D-glyceraldehyde 3-phosphate + L-tryptophan + H2O. It participates in amino-acid biosynthesis; L-tryptophan biosynthesis; L-tryptophan from chorismate: step 5/5. Its function is as follows. The alpha subunit is responsible for the aldol cleavage of indoleglycerol phosphate to indole and glyceraldehyde 3-phosphate. This chain is Tryptophan synthase alpha chain, found in Nitrosomonas europaea (strain ATCC 19718 / CIP 103999 / KCTC 2705 / NBRC 14298).